We begin with the raw amino-acid sequence, 290 residues long: Light-independent protochlorophyllide reductase iron-sulfur ATP-binding protein (290 aa).

ATP-binding positions include 10–15 (GIGKST) and lysine 39. Serine 14 serves as a coordination point for Mg(2+). 2 residues coordinate [4Fe-4S] cluster: cysteine 95 and cysteine 129. 180–181 (NR) serves as a coordination point for ATP.

The protein belongs to the NifH/BchL/ChlL family. In terms of assembly, homodimer. Protochlorophyllide reductase is composed of three subunits; ChlL, ChlN and ChlB. [4Fe-4S] cluster serves as cofactor.

It is found in the plastid. Its subcellular location is the chloroplast. The enzyme catalyses chlorophyllide a + oxidized 2[4Fe-4S]-[ferredoxin] + 2 ADP + 2 phosphate = protochlorophyllide a + reduced 2[4Fe-4S]-[ferredoxin] + 2 ATP + 2 H2O. The protein operates within porphyrin-containing compound metabolism; chlorophyll biosynthesis (light-independent). In terms of biological role, component of the dark-operative protochlorophyllide reductase (DPOR) that uses Mg-ATP and reduced ferredoxin to reduce ring D of protochlorophyllide (Pchlide) to form chlorophyllide a (Chlide). This reaction is light-independent. The L component serves as a unique electron donor to the NB-component of the complex, and binds Mg-ATP. This chain is Light-independent protochlorophyllide reductase iron-sulfur ATP-binding protein, found in Zygnema circumcarinatum (Green alga).